Here is a 275-residue protein sequence, read N- to C-terminus: Alpha carbonic anhydrase 7 (275 aa).

The signal sequence occupies residues 1–27; sequence MVNYSSISCIFFVALFSIFTIVSISSA. N-linked (GlcNAc...) asparagine glycosylation is found at Asn-3 and Asn-96. One can recognise an Alpha-carbonic anhydrase domain in the interval 38–272; sequence REFNYKKNDE…TNKRIVHLYR (235 aa). Cys-63 and Cys-222 are disulfide-bonded. Residue His-104 is the Proton acceptor of the active site. Zn(2+) contacts are provided by His-130, His-132, and His-149. Residue 218-219 coordinates substrate; sequence TT. Residue Asn-225 is glycosylated (N-linked (GlcNAc...) asparagine).

It belongs to the alpha-class carbonic anhydrase family. It depends on Zn(2+) as a cofactor. In terms of processing, N-glycosylated.

The protein localises to the plastid. It localises to the chloroplast stroma. It catalyses the reaction hydrogencarbonate + H(+) = CO2 + H2O. Reversible hydration of carbon dioxide. The chain is Alpha carbonic anhydrase 7 (ACA7) from Arabidopsis thaliana (Mouse-ear cress).